The primary structure comprises 98 residues: Beta-elicitin cinnamomin (98 aa).

Intrachain disulfides connect C3–C71, C27–C56, and C51–C95. The short motif at Y33–P42 is the Beak-like motif 1 (ligand binding) element. The short motif at D72 to D83 is the Beak-like motif 2 (ligand binding) element.

It belongs to the elicitin family.

Its subcellular location is the secreted. Induces local and distal defense responses (incompatible hypersensitive reaction) in plants from the solanaceae and cruciferae families. Elicits leaf necrosis and causes the accumulation of pathogenesis-related proteins. Might interact with the lipidic molecules of the plasma membrane. Elicitins are able to load, carry, and transfer sterols between membranes. This chain is Beta-elicitin cinnamomin, found in Phytophthora cinnamomi (Cinnamon fungus).